A 576-amino-acid polypeptide reads, in one-letter code: A-type ATP synthase subunit A (576 aa).

228–235 (GGFGTGKT) provides a ligand contact to ATP.

Belongs to the ATPase alpha/beta chains family. As to quaternary structure, has multiple subunits with at least A(3), B(3), C, D, E, F, H, I and proteolipid K(x).

The protein localises to the cell membrane. It catalyses the reaction ATP + H2O + 4 H(+)(in) = ADP + phosphate + 5 H(+)(out). Functionally, component of the A-type ATP synthase that produces ATP from ADP in the presence of a proton gradient across the membrane. The A chain is the catalytic subunit. The protein is A-type ATP synthase subunit A of Methanothrix thermoacetophila (strain DSM 6194 / JCM 14653 / NBRC 101360 / PT) (Methanosaeta thermophila).